Consider the following 186-residue polypeptide: Ran guanine nucleotide release factor (186 aa).

An interaction with RAN region spans residues 27 to 70; sequence DLRPVPDNQEVFCHPVTDQSLIVELLELQAHVRGEAAARYHFED.

Belongs to the MOG1 family. Monomer. Interacts with RAN, both RAN-GTP and RAN-GDP. Competes with RCC1 for a common binding site on RAN and thereby inhibits RCC1-mediated nucleotide exchange. Forms a complex with RAN-GTP and RANBP1. Interacts with the cytoplasmic loop 2 of SCN5A. In terms of tissue distribution, isoform 1 and isoform 2 are ubiquitously expressed. Detected in heart and brain.

It is found in the nucleus. The protein localises to the cytoplasm. Its subcellular location is the perinuclear region. It localises to the cell membrane. Its function is as follows. May regulate the intracellular trafficking of RAN. Promotes guanine nucleotide release from RAN and inhibits binding of new GTP by preventing the binding of the RAN guanine nucleotide exchange factor RCC1. Regulates the levels of GTP-bound RAN in the nucleus, and thereby plays a role in the regulation of RAN-dependent mitotic spindle dynamics. Enhances the expression of SCN5A at the cell membrane in cardiomyocytes. The chain is Ran guanine nucleotide release factor (RANGRF) from Homo sapiens (Human).